The chain runs to 649 residues: 2-hydroxyacyl-CoA lyase 2 (649 aa).

A helical transmembrane segment spans residues 2 to 21 (FHLIPFVVAFLLVFLTWFLI). Glutamate 84 serves as a coordination point for thiamine diphosphate. Residues 474 to 554 (DFVGSAAYIL…AIGVIGNDAC (81 aa)) are thiamine pyrophosphate binding. Mg(2+) contacts are provided by aspartate 525 and asparagine 551.

This sequence belongs to the TPP enzyme family. The cofactor is Mg(2+). Requires thiamine diphosphate as cofactor.

It localises to the endoplasmic reticulum membrane. The enzyme catalyses 2-hydroxyoctadecanoyl-CoA = heptadecanal + formyl-CoA. The catalysed reaction is (2R)-hydroxyhexadecanoyl-CoA = pentadecanal + formyl-CoA. Its function is as follows. Endoplasmic reticulum 2-OH acyl-CoA lyase involved in the cleavage (C1 removal) reaction in the fatty acid alpha-oxydation in a thiamine pyrophosphate (TPP)-dependent manner. Involved in the phytosphingosine degradation pathway. This chain is 2-hydroxyacyl-CoA lyase 2 (ilvbl), found in Xenopus laevis (African clawed frog).